A 405-amino-acid chain; its full sequence is Pentatricopeptide repeat-containing protein At3g14580, mitochondrial (405 aa).

The N-terminal 37 residues, 1–37 (MILRRLVLSATSNSNPRRSQSLSSSGVRILSSSSSDR), are a transit peptide targeting the mitochondrion. Residues 13–44 (NSNPRRSQSLSSSGVRILSSSSSDRYTSSSQR) form a disordered region. PPR repeat units follow at residues 94 to 124 (TESL…IKLE), 130 to 165 (SEEF…GCWP), 166 to 200 (SSKS…GVEI), 201 to 235 (DACC…KSRP), 236 to 270 (NVMT…RIEP), 271 to 305 (DTIT…GCEP), 306 to 340 (NPGT…GMRP), and 341 to 375 (SFLS…GFVP).

It belongs to the PPR family. P subfamily.

It is found in the mitochondrion. This chain is Pentatricopeptide repeat-containing protein At3g14580, mitochondrial, found in Arabidopsis thaliana (Mouse-ear cress).